The chain runs to 525 residues: Glutathione hydrolase-like YwrD proenzyme (525 aa).

The Nucleophile role is filled by T339.

This sequence belongs to the gamma-glutamyltransferase family. This enzyme consists of two polypeptide chains, which are synthesized from a single polypeptide. Post-translationally, cleaved by autocatalysis into a large and a small subunit.

It carries out the reaction an N-terminal (5-L-glutamyl)-[peptide] + an alpha-amino acid = 5-L-glutamyl amino acid + an N-terminal L-alpha-aminoacyl-[peptide]. It catalyses the reaction glutathione + H2O = L-cysteinylglycine + L-glutamate. The enzyme catalyses an S-substituted glutathione + H2O = an S-substituted L-cysteinylglycine + L-glutamate. Overexpressed protein with an N-terminal His tag has been reported not to hydrolyze glutathione; it is not clear if the construct is processed to 2 subunits. This chain is Glutathione hydrolase-like YwrD proenzyme (ywrD), found in Bacillus subtilis (strain 168).